The following is a 361-amino-acid chain: Chorismate synthase (361 aa).

Residues arginine 48 and arginine 54 each coordinate NADP(+). Residues 125–127, 238–239, glycine 278, 293–297, and arginine 319 contribute to the FMN site; these read RSS, NA, and KPTSS.

The protein belongs to the chorismate synthase family. In terms of assembly, homotetramer. The cofactor is FMNH2.

The catalysed reaction is 5-O-(1-carboxyvinyl)-3-phosphoshikimate = chorismate + phosphate. Its pathway is metabolic intermediate biosynthesis; chorismate biosynthesis; chorismate from D-erythrose 4-phosphate and phosphoenolpyruvate: step 7/7. Functionally, catalyzes the anti-1,4-elimination of the C-3 phosphate and the C-6 proR hydrogen from 5-enolpyruvylshikimate-3-phosphate (EPSP) to yield chorismate, which is the branch point compound that serves as the starting substrate for the three terminal pathways of aromatic amino acid biosynthesis. This reaction introduces a second double bond into the aromatic ring system. The protein is Chorismate synthase of Methylobacillus flagellatus (strain ATCC 51484 / DSM 6875 / VKM B-1610 / KT).